Here is a 377-residue protein sequence, read N- to C-terminus: Cilia- and flagella-associated protein 263 (377 aa).

Coiled coils occupy residues 95 to 243 (LTAD…NQEL) and 280 to 354 (LRKE…SLKG).

This sequence belongs to the CFAP263 family. Forms a complex with CFAP184; the interaction is required for functional activity in cilia. Interacts with HAP1 and PCM1.

The protein localises to the cytoplasm. It is found in the cytoskeleton. Its subcellular location is the microtubule organizing center. It localises to the centrosome. The protein resides in the centriolar satellite. The protein localises to the cell projection. It is found in the cilium. Its function is as follows. Component of centriolar satellites contributing to primary cilium formation. In complex with CFAP263, acts as a regulator of ciliary beating that connects radial spoke 3 (RS3) to the inner dynein arm (IDA) and the nexin-dynein regulatory complex (N-DRC). The complex is positioned parallel to N-DRC and forms a connection between the arch at the base of RS3, the IDA tail and N-DRC. This Homo sapiens (Human) protein is Cilia- and flagella-associated protein 263.